Reading from the N-terminus, the 387-residue chain is Succinate--CoA ligase [ADP-forming] subunit beta (387 aa).

Residues 9–245 (KDLLESYGLK…KSQENAKELK (237 aa)) enclose the ATP-grasp domain. ATP is bound by residues lysine 46, 53–55 (GRG), glutamate 100, tyrosine 103, and glutamate 108. Residues asparagine 200 and aspartate 214 each coordinate Mg(2+). Residues asparagine 265 and 322-324 (GIV) each bind substrate.

This sequence belongs to the succinate/malate CoA ligase beta subunit family. In terms of assembly, heterotetramer of two alpha and two beta subunits. Requires Mg(2+) as cofactor.

The catalysed reaction is succinate + ATP + CoA = succinyl-CoA + ADP + phosphate. The enzyme catalyses GTP + succinate + CoA = succinyl-CoA + GDP + phosphate. Its pathway is carbohydrate metabolism; tricarboxylic acid cycle; succinate from succinyl-CoA (ligase route): step 1/1. Functionally, succinyl-CoA synthetase functions in the citric acid cycle (TCA), coupling the hydrolysis of succinyl-CoA to the synthesis of either ATP or GTP and thus represents the only step of substrate-level phosphorylation in the TCA. The beta subunit provides nucleotide specificity of the enzyme and binds the substrate succinate, while the binding sites for coenzyme A and phosphate are found in the alpha subunit. This chain is Succinate--CoA ligase [ADP-forming] subunit beta, found in Francisella tularensis subsp. holarctica (strain FTNF002-00 / FTA).